A 929-amino-acid chain; its full sequence is Bifunctional uridylyltransferase/uridylyl-removing enzyme (929 aa).

Residues 1 to 383 (MDSVTTEHKQ…RPTPAKRRVP (383 aa)) form a uridylyltransferase region. A uridylyl-removing region spans residues 384–739 (DSDDFIVDNN…VGFDEVRGVT (356 aa)). The HD domain maps to 499–622 (VDEHLIRCVG…VQSVEQMKLL (124 aa)). 2 ACT domains span residues 740-822 (ELTI…VVAR) and 850-927 (VIEV…AVQP).

The protein belongs to the GlnD family. It depends on Mg(2+) as a cofactor.

It carries out the reaction [protein-PII]-L-tyrosine + UTP = [protein-PII]-uridylyl-L-tyrosine + diphosphate. It catalyses the reaction [protein-PII]-uridylyl-L-tyrosine + H2O = [protein-PII]-L-tyrosine + UMP + H(+). With respect to regulation, uridylyltransferase (UTase) activity is inhibited by glutamine, while glutamine activates uridylyl-removing (UR) activity. Functionally, modifies, by uridylylation and deuridylylation, the PII regulatory proteins (GlnB and homologs), in response to the nitrogen status of the cell that GlnD senses through the glutamine level. Under low glutamine levels, catalyzes the conversion of the PII proteins and UTP to PII-UMP and PPi, while under higher glutamine levels, GlnD hydrolyzes PII-UMP to PII and UMP (deuridylylation). Thus, controls uridylylation state and activity of the PII proteins, and plays an important role in the regulation of nitrogen fixation and metabolism. The polypeptide is Bifunctional uridylyltransferase/uridylyl-removing enzyme (Bradyrhizobium diazoefficiens (strain JCM 10833 / BCRC 13528 / IAM 13628 / NBRC 14792 / USDA 110)).